A 366-amino-acid chain; its full sequence is Anhydro-N-acetylmuramic acid kinase (366 aa).

Residue 10–17 participates in ATP binding; sequence GTSMDGID.

It belongs to the anhydro-N-acetylmuramic acid kinase family.

The catalysed reaction is 1,6-anhydro-N-acetyl-beta-muramate + ATP + H2O = N-acetyl-D-muramate 6-phosphate + ADP + H(+). Its pathway is amino-sugar metabolism; 1,6-anhydro-N-acetylmuramate degradation. It functions in the pathway cell wall biogenesis; peptidoglycan recycling. Its function is as follows. Catalyzes the specific phosphorylation of 1,6-anhydro-N-acetylmuramic acid (anhMurNAc) with the simultaneous cleavage of the 1,6-anhydro ring, generating MurNAc-6-P. Is required for the utilization of anhMurNAc either imported from the medium or derived from its own cell wall murein, and thus plays a role in cell wall recycling. This chain is Anhydro-N-acetylmuramic acid kinase, found in Legionella pneumophila (strain Corby).